A 196-amino-acid chain; its full sequence is Anthranilate synthase component 2 (196 aa).

A Glutamine amidotransferase type-1 domain is found at 3 to 196 (NIVFIDNFDS…IEWALEKNNA (194 aa)). Position 57-59 (57-59 (GPG)) interacts with L-glutamine. Cysteine 84 serves as the catalytic Nucleophile; for GATase activity. L-glutamine is bound by residues glutamine 88 and 134-135 (SL). Residues histidine 170 and glutamate 172 each act as for GATase activity in the active site.

Heterotetramer consisting of two non-identical subunits: a beta subunit (TrpG) and a large alpha subunit (TrpE).

The enzyme catalyses chorismate + L-glutamine = anthranilate + pyruvate + L-glutamate + H(+). It functions in the pathway amino-acid biosynthesis; L-tryptophan biosynthesis; L-tryptophan from chorismate: step 1/5. Its function is as follows. Part of a heterotetrameric complex that catalyzes the two-step biosynthesis of anthranilate, an intermediate in the biosynthesis of L-tryptophan. In the first step, the glutamine-binding beta subunit (TrpG) of anthranilate synthase (AS) provides the glutamine amidotransferase activity which generates ammonia as a substrate that, along with chorismate, is used in the second step, catalyzed by the large alpha subunit of AS (TrpE) to produce anthranilate. In the absence of TrpG, TrpE can synthesize anthranilate directly from chorismate and high concentrations of ammonia. The chain is Anthranilate synthase component 2 (trpG) from Vibrio parahaemolyticus serotype O3:K6 (strain RIMD 2210633).